The chain runs to 155 residues: Leader peptidase HopD (155 aa).

Belongs to the peptidase A24 family.

This Salmonella typhimurium (strain LT2 / SGSC1412 / ATCC 700720) protein is Leader peptidase HopD (hopD).